A 329-amino-acid chain; its full sequence is Transcription factor RF2b (329 aa).

2 disordered regions span residues 1 to 24 (MQEP…RSEV) and 62 to 97 (SSGP…DGSG). A bZIP domain is found at 132–195 (DPKRAKRILA…TGLSAENAEL (64 aa)). The segment at 134–155 (KRAKRILANRQSAARSKERKAR) is basic motif. Residues 160-174 (LERKVQTLQTEATTL) form a leucine-zipper region. The tract at residues 260 to 303 (RQNGGTQLPPQFQPPRPNVPNHMLSHPNGLQDIMQQDPLGRLQG) is disordered.

The protein belongs to the bZIP family. As to quaternary structure, binds DNA as a homodimer or as a heterodimer with RF2a. The heterodimer binds stronger to DNA than the homodimer. In terms of tissue distribution, expressed at high levels in roots, low level in leaf sheath, but not in leaf blade. Predominantly expressed in vascular tissues.

Its subcellular location is the nucleus. Transcription factor probably involved in vascular development and shoot tissue organization. Binds to the DNA sequence 5'-CCGAGTGTGCCCCTGG-3' present in the promoter region Box II of the phloem-specific rice tungro bacilliform virus (RTBV) promoter. May regulate tissue-specific expression of the RTBV promoter and virus replication. In Oryza sativa subsp. japonica (Rice), this protein is Transcription factor RF2b (RF2b).